Consider the following 352-residue polypeptide: Divinyl chlorophyll a/b light-harvesting protein PcbB (352 aa).

6 helical membrane-spanning segments follow: residues 27–47, 89–109, 142–162, 203–223, 243–263, and 307–327; these read FIAA…AFTL, CTVI…GGIL, FILG…VEWA, VMGG…FHII, AVLS…AFWS, and LANV…WHAL.

This sequence belongs to the PsbB/PsbC family. IsiA/Pcb subfamily. As to quaternary structure, the antenna complex consists of divinyl chlorophylls (a and b) and divinyl chlorophyll a/b binding proteins and binds more divinyl chlorophyll b than does the antenna complex from high-light-adapted Prochlorococcus. The cofactor is divinyl chlorophyll a. Requires divinyl chlorophyll b as cofactor.

It is found in the cellular thylakoid membrane. Its function is as follows. The antenna complex functions as a light receptor, it captures and delivers excitation energy to photosystems II and I. The Prochlorales pcb genes are not related to higher plant LHCs. The sequence is that of Divinyl chlorophyll a/b light-harvesting protein PcbB (pcbB) from Prochlorococcus marinus (strain NATL2A).